The primary structure comprises 615 residues: Threonine--tRNA ligase (615 aa).

The tract at residues 1–132 is editing domain; that stretch reads MRILQLHCDR…PLAEGFKVIT (132 aa). Positions 196 to 495 are catalytic; it reads PHVALMKRMG…SARGTKPELP (300 aa). The Zn(2+) site is built by Cys-288, His-340, and His-464.

The protein belongs to the class-II aminoacyl-tRNA synthetase family. Homodimer. Zn(2+) is required as a cofactor.

It is found in the cytoplasm. The catalysed reaction is tRNA(Thr) + L-threonine + ATP = L-threonyl-tRNA(Thr) + AMP + diphosphate + H(+). Its function is as follows. Catalyzes the attachment of threonine to tRNA(Thr) in a two-step reaction: L-threonine is first activated by ATP to form Thr-AMP and then transferred to the acceptor end of tRNA(Thr). Also edits incorrectly charged L-seryl-tRNA(Thr). The protein is Threonine--tRNA ligase (thrS) of Cenarchaeum symbiosum (strain A).